Consider the following 600-residue polypeptide: Putative acetyltransferase MPN_114 (600 aa).

The active-site Proton acceptor is His323. 396 to 409 provides a ligand contact to CoA; sequence TKPLIKAKGIKNSE.

It belongs to the carnitine/choline acetyltransferase family.

The polypeptide is Putative acetyltransferase MPN_114 (Mycoplasma pneumoniae (strain ATCC 29342 / M129 / Subtype 1) (Mycoplasmoides pneumoniae)).